The chain runs to 419 residues: Gamma-glutamyl phosphate reductase (419 aa).

This sequence belongs to the gamma-glutamyl phosphate reductase family.

Its subcellular location is the cytoplasm. It carries out the reaction L-glutamate 5-semialdehyde + phosphate + NADP(+) = L-glutamyl 5-phosphate + NADPH + H(+). The protein operates within amino-acid biosynthesis; L-proline biosynthesis; L-glutamate 5-semialdehyde from L-glutamate: step 2/2. Catalyzes the NADPH-dependent reduction of L-glutamate 5-phosphate into L-glutamate 5-semialdehyde and phosphate. The product spontaneously undergoes cyclization to form 1-pyrroline-5-carboxylate. This Gloeobacter violaceus (strain ATCC 29082 / PCC 7421) protein is Gamma-glutamyl phosphate reductase.